Consider the following 250-residue polypeptide: UPF0259 membrane protein Spro_2675 (250 aa).

A run of 6 helical transmembrane segments spans residues 23-43 (ILMLALLTAFISVLLNQAFSP), 87-107 (AATFSALVGNVLLVGGMLTLI), 132-152 (LLLLLFICTLLIQLGLTLFVV), 156-176 (IMAIAFSLAPVITATDKKGVF), 192-212 (VIVPAMMLWLAAKLLVLFMVS), and 222-242 (ASVVLTALSNLVSALLLIYLF).

This sequence belongs to the UPF0259 family.

The protein resides in the cell inner membrane. This is UPF0259 membrane protein Spro_2675 from Serratia proteamaculans (strain 568).